A 118-amino-acid polypeptide reads, in one-letter code: NMVQFKSMVQCTSTRPWLDYVDYGCNCDIGGTGTPLDELDRCCQTHANCYTEARKFPECAPYYKTYSYTCSGGTITCNADNDECAASVCNCDRTAALCFAGAPYNQNNFDVDLETRCQ.

7 disulfide bridges follow: Cys11/Cys70, Cys25/Cys117, Cys27/Cys43, Cys42/Cys98, Cys49/Cys91, Cys59/Cys84, and Cys77/Cys89.

It belongs to the phospholipase A2 family. Group I subfamily. A49 sub-subfamily. As to expression, expressed by the venom gland.

It is found in the secreted. In terms of biological role, snake venom phospholipase A2 (PLA2) homolog that lacks both catalytic and neurotoxicity activities. The protein is Acidic phospholipase A2 homolog of Bungarus fasciatus (Banded krait).